The primary structure comprises 384 residues: GTPase Obg (384 aa).

One can recognise an Obg domain in the interval 1–159 (MKFIDEAKIE…RSLQLELKVL (159 aa)). The disordered stretch occupies residues 20 to 46 (ATSFRREKFVPRGGPDGGDGGKGGSVW). A compositionally biased stretch (gly residues) spans 33-43 (GPDGGDGGKGG). Residues 160 to 348 (ADVGLLGMPN…LVHQINQYLI (189 aa)) form the OBG-type G domain. GTP-binding positions include 166–173 (GMPNAGKS), 191–195 (FTTLH), 213–216 (DIPG), 284–287 (NKLD), and 329–331 (SAL). Residues S173 and T193 each contribute to the Mg(2+) site. Residues 364 to 384 (ATNVEIAEQQPKTDTGVFKPE) are disordered.

Belongs to the TRAFAC class OBG-HflX-like GTPase superfamily. OBG GTPase family. Monomer. Mg(2+) is required as a cofactor.

It is found in the cytoplasm. Its function is as follows. An essential GTPase which binds GTP, GDP and possibly (p)ppGpp with moderate affinity, with high nucleotide exchange rates and a fairly low GTP hydrolysis rate. Plays a role in control of the cell cycle, stress response, ribosome biogenesis and in those bacteria that undergo differentiation, in morphogenesis control. The sequence is that of GTPase Obg from Neisseria meningitidis serogroup A / serotype 4A (strain DSM 15465 / Z2491).